Reading from the N-terminus, the 111-residue chain is Disintegrin CV-11-alpha (111 aa).

The first 20 residues, 1-20 (MIQVLLVIICLAVFPYQGSS), serve as a signal peptide directing secretion. Residues 21 to 46 (IILESGNVNDFELVYPKKVTVLPTGA) constitute a propeptide that is removed on maturation. In terms of domain architecture, Disintegrin spans 47–111 (MNSAHPCCDP…SDCPRNPWKD (65 aa)). 4 disulfides stabilise this stretch: Cys53–Cys76, Cys67–Cys73, Cys72–Cys97, and Cys85–Cys104. Positions 89-91 (KGD) match the Cell attachment site motif.

It belongs to the disintegrin family. Dimeric disintegrin subfamily. Heterodimer with subunit beta; disulfide-linked. Expressed by the venom gland.

The protein localises to the secreted. Its function is as follows. Inhibits ADP-induced human platelet aggregation. Antagonist of alpha-IIb/beta-3 (ITGA2B/ITGB3). The chain is Disintegrin CV-11-alpha from Cerastes vipera (Sahara sand viper).